Consider the following 936-residue polypeptide: DNA topoisomerase 1 (936 aa).

One can recognise a Toprim domain in the interval 15–139 (RRLVIVESPT…VKRMVFHEIT (125 aa)). Mg(2+) is bound by residues E21 and D108. The Topo IA-type catalytic domain maps to 154-611 (DIALVDAQET…FYFGGEHGVE (458 aa)). The interval 188 to 193 (SAGRVQ) is interaction with DNA. Y339 functions as the O-(5'-phospho-DNA)-tyrosine intermediate in the catalytic mechanism. 4 disordered regions span residues 661-688 (LERMVDDPDNPGEQKPQRANLKEDLTPD), 732-767 (VLPEPEDGGDDGTAGTPAKKGKKPTGPKPRTGSLFR), 841-884 (KRRG…ETNA), and 903-936 (LLADRRARGPVKKKAPAKKAAKKAPAKKAAAKKA). Residues 910–936 (RGPVKKKAPAKKAAKKAPAKKAAAKKA) are compositionally biased toward basic residues.

This sequence belongs to the type IA topoisomerase family. Monomer. Mg(2+) is required as a cofactor.

The catalysed reaction is ATP-independent breakage of single-stranded DNA, followed by passage and rejoining.. Releases the supercoiling and torsional tension of DNA, which is introduced during the DNA replication and transcription, by transiently cleaving and rejoining one strand of the DNA duplex. Introduces a single-strand break via transesterification at a target site in duplex DNA. The scissile phosphodiester is attacked by the catalytic tyrosine of the enzyme, resulting in the formation of a DNA-(5'-phosphotyrosyl)-enzyme intermediate and the expulsion of a 3'-OH DNA strand. The free DNA strand then undergoes passage around the unbroken strand, thus removing DNA supercoils. Finally, in the religation step, the DNA 3'-OH attacks the covalent intermediate to expel the active-site tyrosine and restore the DNA phosphodiester backbone. Its function is as follows. Relaxes negatively (but not positively) supercoiled DNA, concatanates and knots circular ssDNA at 52 but not 37 degrees Celsius. Preferentially nicks supercoiled DNA at C(G/T)CTT, cutting between the TT residues, binds ss and dsDNA with the recognition site. In Mycolicibacterium smegmatis (strain ATCC 700084 / mc(2)155) (Mycobacterium smegmatis), this protein is DNA topoisomerase 1.